The sequence spans 312 residues: 2-dehydropantoate 2-reductase (312 aa).

NADP(+) is bound by residues 7–12, N105, and A131; that span reads GAGAMG. Residue N105 participates in substrate binding. K187 acts as the Proton donor in catalysis. Substrate-binding residues include N191, N195, and S260. E273 serves as a coordination point for NADP(+).

The protein belongs to the ketopantoate reductase family.

Its subcellular location is the cytoplasm. It catalyses the reaction (R)-pantoate + NADP(+) = 2-dehydropantoate + NADPH + H(+). It functions in the pathway cofactor biosynthesis; (R)-pantothenate biosynthesis; (R)-pantoate from 3-methyl-2-oxobutanoate: step 2/2. Catalyzes the NADPH-dependent reduction of ketopantoate into pantoic acid. In Lactococcus lactis subsp. lactis (strain IL1403) (Streptococcus lactis), this protein is 2-dehydropantoate 2-reductase.